The primary structure comprises 260 residues: Hydroxyacylglutathione hydrolase (260 aa).

Residues histidine 55, histidine 57, aspartate 59, histidine 60, histidine 116, aspartate 133, and histidine 171 each contribute to the Zn(2+) site.

This sequence belongs to the metallo-beta-lactamase superfamily. Glyoxalase II family. As to quaternary structure, monomer. Zn(2+) is required as a cofactor.

It catalyses the reaction an S-(2-hydroxyacyl)glutathione + H2O = a 2-hydroxy carboxylate + glutathione + H(+). The protein operates within secondary metabolite metabolism; methylglyoxal degradation; (R)-lactate from methylglyoxal: step 2/2. Functionally, thiolesterase that catalyzes the hydrolysis of S-D-lactoyl-glutathione to form glutathione and D-lactic acid. In Shewanella loihica (strain ATCC BAA-1088 / PV-4), this protein is Hydroxyacylglutathione hydrolase.